The primary structure comprises 1066 residues: Ubiquitin conjugation factor E4 A (1066 aa).

The interval 35–57 (QLKQQSDELPASPDDSDNSVSES) is disordered. N6-acetyllysine is present on K386. Positions 987–1061 (DACDEFLDPI…QRWLAERKQQ (75 aa)) constitute a U-box domain.

Belongs to the ubiquitin conjugation factor E4 family.

The protein localises to the cytoplasm. The enzyme catalyses S-ubiquitinyl-[E2 ubiquitin-conjugating enzyme]-L-cysteine + [acceptor protein]-L-lysine = [E2 ubiquitin-conjugating enzyme]-L-cysteine + N(6)-ubiquitinyl-[acceptor protein]-L-lysine.. The protein operates within protein modification; protein ubiquitination. Functionally, ubiquitin-protein ligase that probably functions as an E3 ligase in conjunction with specific E1 and E2 ligases. May also function as an E4 ligase mediating the assembly of polyubiquitin chains on substrates ubiquitinated by another E3 ubiquitin ligase. Mediates 'Lys-48'-linked polyubiquitination of substrates. The chain is Ubiquitin conjugation factor E4 A from Rattus norvegicus (Rat).